Here is a 573-residue protein sequence, read N- to C-terminus: 2-succinyl-5-enolpyruvyl-6-hydroxy-3-cyclohexene-1-carboxylate synthase (573 aa).

Belongs to the TPP enzyme family. MenD subfamily. Homodimer. Requires Mg(2+) as cofactor. Mn(2+) serves as cofactor. The cofactor is thiamine diphosphate.

It carries out the reaction isochorismate + 2-oxoglutarate + H(+) = 5-enolpyruvoyl-6-hydroxy-2-succinyl-cyclohex-3-ene-1-carboxylate + CO2. Its pathway is quinol/quinone metabolism; 1,4-dihydroxy-2-naphthoate biosynthesis; 1,4-dihydroxy-2-naphthoate from chorismate: step 2/7. It participates in quinol/quinone metabolism; menaquinone biosynthesis. Its function is as follows. Catalyzes the thiamine diphosphate-dependent decarboxylation of 2-oxoglutarate and the subsequent addition of the resulting succinic semialdehyde-thiamine pyrophosphate anion to isochorismate to yield 2-succinyl-5-enolpyruvyl-6-hydroxy-3-cyclohexene-1-carboxylate (SEPHCHC). The sequence is that of 2-succinyl-5-enolpyruvyl-6-hydroxy-3-cyclohexene-1-carboxylate synthase from Shewanella putrefaciens (strain CN-32 / ATCC BAA-453).